Here is a 424-residue protein sequence, read N- to C-terminus: MKPQWQQYINIIKQVVKPALGCTEPIAAAYAAAVARALLGVEPDSIAVQVSDNLYKNSMGVFVPGTGKIGLAIAAAAGAIAGNPDAGLEVLAVITPEQVARAQALIDAGKVTVERTETAEFIYCCVIAKKGDREALVKICGGHTLIAEKRLNGESVFSVDSTQAKATGSICEGVDITIESIYRFAQEVPFEEIKFILEASELNGKLSDEGMANPYGLEVGRTMKSGIAAGIIGEDLLNKIVMLTAAASDARMGGANLPAMSNLGSGNQGIAATIPVVLTAQCYKVSEEQLARALIMSHLGAIYIKSHYPPLSAFCGNTVTSAAASMAMVYLAGGSFEQSCFAIQNVISDSSGMVCDGAKASCAMKVSTSSSAAVRSFLMALSSHNVSGQGIIATDVEKTIKNIGKMILNGMSSTDVTIIDIMSA.

Belongs to the UPF0597 family.

This chain is UPF0597 protein Sbal223_1296, found in Shewanella baltica (strain OS223).